The primary structure comprises 225 residues: MGIVVGVDEAGRGSLVGDLVVAGFAVEEARLGELQSLGVRDSKQLSPAARVELYREISGVGFFTVEAIRPWEIDGENINILVTKAVEEIVSRIVSYLGVHPSLVVVDKYGDVQGLRLALTRLGIEPRSILVEEKADSRYPVVSAASIVAKVVRDARLQVLRRMYGVRGSGYPSDPETREWVREVFARGEAPRVIRYTWSTVRKLGGPWRSKKAGRNRSLDEFLGG.

Residues 2 to 210 enclose the RNase H type-2 domain; the sequence is GIVVGVDEAG…VRKLGGPWRS (209 aa). 3 residues coordinate a divalent metal cation: Asp-8, Glu-9, and Asp-107.

It belongs to the RNase HII family. The cofactor is Mn(2+). Requires Mg(2+) as cofactor.

It is found in the cytoplasm. It carries out the reaction Endonucleolytic cleavage to 5'-phosphomonoester.. Endonuclease that specifically degrades the RNA of RNA-DNA hybrids. The polypeptide is Ribonuclease HII (rnhB) (Aeropyrum pernix (strain ATCC 700893 / DSM 11879 / JCM 9820 / NBRC 100138 / K1)).